The following is a 312-amino-acid chain: Ribosomal protein L11 methyltransferase (312 aa).

4 residues coordinate S-adenosyl-L-methionine: T162, G183, D205, and N248.

Belongs to the methyltransferase superfamily. PrmA family.

It is found in the cytoplasm. It carries out the reaction L-lysyl-[protein] + 3 S-adenosyl-L-methionine = N(6),N(6),N(6)-trimethyl-L-lysyl-[protein] + 3 S-adenosyl-L-homocysteine + 3 H(+). Functionally, methylates ribosomal protein L11. In Exiguobacterium sp. (strain ATCC BAA-1283 / AT1b), this protein is Ribosomal protein L11 methyltransferase.